The sequence spans 187 residues: Adenine phosphoribosyltransferase (187 aa).

The protein belongs to the purine/pyrimidine phosphoribosyltransferase family. In terms of assembly, homodimer.

It localises to the cytoplasm. It catalyses the reaction AMP + diphosphate = 5-phospho-alpha-D-ribose 1-diphosphate + adenine. It participates in purine metabolism; AMP biosynthesis via salvage pathway; AMP from adenine: step 1/1. In terms of biological role, catalyzes a salvage reaction resulting in the formation of AMP, that is energically less costly than de novo synthesis. In Yersinia pseudotuberculosis serotype I (strain IP32953), this protein is Adenine phosphoribosyltransferase.